The sequence spans 644 residues: Threonine--tRNA ligase (644 aa).

The region spanning 1 to 61 (MPVITLPDGS…EKDTKLTIIT (61 aa)) is the TGS domain. The tract at residues 242–535 (DHRRIGADLD…LIEHYEGKFP (294 aa)) is catalytic. Zn(2+) contacts are provided by C335, H386, and H512.

It belongs to the class-II aminoacyl-tRNA synthetase family. In terms of assembly, homodimer. Zn(2+) is required as a cofactor.

The protein localises to the cytoplasm. It carries out the reaction tRNA(Thr) + L-threonine + ATP = L-threonyl-tRNA(Thr) + AMP + diphosphate + H(+). Its function is as follows. Catalyzes the attachment of threonine to tRNA(Thr) in a two-step reaction: L-threonine is first activated by ATP to form Thr-AMP and then transferred to the acceptor end of tRNA(Thr). Also edits incorrectly charged L-seryl-tRNA(Thr). The chain is Threonine--tRNA ligase from Nitrosococcus oceani (strain ATCC 19707 / BCRC 17464 / JCM 30415 / NCIMB 11848 / C-107).